The chain runs to 117 residues: Replication initiation control protein YabA (117 aa).

Positions 45 to 81 (NQHLRERLDQSDRDKSSETENDSAQKPGHSDIGEGHD) are disordered. 2 stretches are compositionally biased toward basic and acidic residues: residues 46-62 (QHLR…KSSE) and 72-81 (GHSDIGEGHD). The Zn(2+) site is built by H92, C94, C107, and C110.

This sequence belongs to the YabA family. As to quaternary structure, homotetramer. Interacts with both DnaA and DnaN, acting as a bridge between these two proteins. The cofactor is Zn(2+).

It is found in the cytoplasm. It localises to the nucleoid. In terms of biological role, involved in control of chromosome replication initiation. Inhibits the cooperative binding of DnaA to the oriC region, thus negatively regulating initiation of chromosome replication. Inhibits the ability of DnaA-ATP to form a helix on DNA; does not disassemble preformed DnaA-DNA helices. Decreases the residence time of DnaA on the chromosome at its binding sites (oriC, replication forks and promoter-binding sites). Tethers DnaA to the replication machinery via the DNA polymerase beta sliding clamp subunit (dnaN). Associates with oriC and other DnaA targets on the chromosome in a DnaA-dependent manner. The sequence is that of Replication initiation control protein YabA from Bacillus pumilus (strain SAFR-032).